The chain runs to 334 residues: MSQSKGKKRNPGLKIPKEAFEQPQTSSTPPRDLDSKACISIGNQNFEVKADDLEPIVELGRGAYGVVEKMRHVPSEQIMAVKRIRATVNSQEQKRLLMDLDISMRTVDCPFTVTFYGALFREGDVWICMELMDTSLDKFYKQVIDKGQTIPEDILGKIAVSIVKALEHLHSKLSVIHRDVKPSNVLINALGQVKMCDFGISGYLVDSVAKTIDAGCKPYMAPERINPELNQKGYSVKSDIWSLGITMIELAILRFPYDSWGTPFQQLKQVVEEPSPQLPADKFSEEFVDFTSQCLKKNSKERPTYPELMQHPFFTLHESKATDVASFVKSILGD.

Residues 1–11 (MSQSKGKKRNP) are compositionally biased toward basic residues. The segment at 1-34 (MSQSKGKKRNPGLKIPKEAFEQPQTSSTPPRDLD) is disordered. The d domain stretch occupies residues 4-19 (SKGKKRNPGLKIPKEA). The Protein kinase domain maps to 53–314 (LEPIVELGRG…YPELMQHPFF (262 aa)). Residues 59–67 (LGRGAYGVV) and lysine 82 each bind ATP. Aspartate 179 functions as the Proton acceptor in the catalytic mechanism. Serine 207 carries the phosphoserine; by MAPK3 modification. Threonine 211 bears the Phosphothreonine; by MAPK3 mark. A DVD domain region spans residues 311-334 (HPFFTLHESKATDVASFVKSILGD).

It belongs to the protein kinase superfamily. STE Ser/Thr protein kinase family. MAP kinase kinase subfamily. As to quaternary structure, dimer. Interacts (via its D domain) with its substrates MAPK11, MAPK12, MAPK13 and MAPK14. Interacts (via its DVD domain) with MAP3Ks activators like MAP3K5/ASK1, MAP3K1/MEKK1, MAP3K2/MEKK2, MAP3K3/MEKK3, MAP3K4/MEKK4, MAP3K7/TAK1, MAP3K11/MLK3 and MAP3K17/TAOK2. Interacts with DCTN1. Interacts with EIF2AK2/PKR. In terms of processing, weakly autophosphorylated. Phosphorylated at Ser-207 and Thr-211 by the majority of M3Ks, such as MAP3K5/ASK1, MAP3K1/MEKK1, MAP3K2/MEKK2, MAP3K3/MEKK3, MAP3K4/MEKK4, MAP3K7/TAK1, MAP3K11/MLK3 and MAP3K17/TAOK2. Post-translationally, in response to genotoxic stress, MAP3K-phosphorylated MAP2K6 is ubiquitinated and degraded by the SCF(FBXO31) complex.

It localises to the nucleus. It is found in the cytoplasm. Its subcellular location is the cytoskeleton. The enzyme catalyses L-seryl-[protein] + ATP = O-phospho-L-seryl-[protein] + ADP + H(+). It carries out the reaction L-threonyl-[protein] + ATP = O-phospho-L-threonyl-[protein] + ADP + H(+). The catalysed reaction is L-tyrosyl-[protein] + ATP = O-phospho-L-tyrosyl-[protein] + ADP + H(+). With respect to regulation, activated by dual phosphorylation on Ser-207 and Thr-211 in response to a variety of cellular stresses, including UV radiation, osmotic shock, hypoxia, inflammatory cytokines, interferon gamma (IFNG), and less often by growth factors. MAP2K6/MKK6 is activated by the majority of M3Ks, such as MAP3K5/ASK1, MAP3K1/MEKK1, MAP3K2/MEKK2, MAP3K3/MEKK3, MAP3K4/MEKK4, MAP3K7/TAK1, MAP3K11/MLK3 and MAP3K17/TAOK2. In terms of biological role, dual specificity protein kinase which acts as an essential component of the MAP kinase signal transduction pathway. With MAP3K3/MKK3, catalyzes the concomitant phosphorylation of a threonine and a tyrosine residue in the MAP kinases p38 MAPK11, MAPK12, MAPK13 and MAPK14 and plays an important role in the regulation of cellular responses to cytokines and all kinds of stresses. Especially, MAP2K3/MKK3 and MAP2K6/MKK6 are both essential for the activation of MAPK11 and MAPK13 induced by environmental stress, whereas MAP2K6/MKK6 is the major MAPK11 activator in response to TNF. MAP2K6/MKK6 also phosphorylates and activates PAK6. The p38 MAP kinase signal transduction pathway leads to direct activation of transcription factors. Nuclear targets of p38 MAP kinase include the transcription factors ATF2 and ELK1. Within the p38 MAPK signal transduction pathway, MAP3K6/MKK6 mediates phosphorylation of STAT4 through MAPK14 activation, and is therefore required for STAT4 activation and STAT4-regulated gene expression in response to IL-12 stimulation. The pathway is also crucial for IL-6-induced SOCS3 expression and down-regulation of IL-6-mediated gene induction; and for IFNG-dependent gene transcription. Has a role in osteoclast differentiation through NF-kappa-B transactivation by TNFSF11, and in endochondral ossification and since SOX9 is another likely downstream target of the p38 MAPK pathway. MAP2K6/MKK6 mediates apoptotic cell death in thymocytes. Acts also as a regulator for melanocytes dendricity, through the modulation of Rho family GTPases. This chain is Dual specificity mitogen-activated protein kinase kinase 6 (MAP2K6), found in Bos taurus (Bovine).